We begin with the raw amino-acid sequence, 565 residues long: uncharacterized protein (565 aa).

Helical transmembrane passes span 4–26 (FVQFLGSNPYILLFLTIGLAVWV), 33–55 (GYGLGAVAAAIVVGCLVATVGAA), 68–90 (SLLYYLFMYGVGLRVGPSFVNAL), 97–119 (YAILAIIAPILGLAIVVLGTQFF), and 162–184 (ISAMIALSYGITYIWGTVGIILL). RCK C-terminal domains follow at residues 210 to 295 (PNVD…LGPE) and 296 to 379 (VPDA…IFGV). The next 5 helical transmembrane spans lie at 389-411 (LLTLSFGMILGFLIGLIEVPAFG), 415-432 (GLGNAGGLLLSGIIVSSI), 453-472 (LGLIGFVAIVGINAGADLLT), 482-504 (IFIVGFLASTIPPIIVWAIGFHI), and 539-561 (WLGFPVGYAVSGVLLTVFGYFAM).

The protein belongs to the AAE transporter (TC 2.A.81) family.

It localises to the cell membrane. This is an uncharacterized protein from Bordetella parapertussis (strain 12822 / ATCC BAA-587 / NCTC 13253).